The following is a 463-amino-acid chain: Glutamate--tRNA ligase (463 aa).

Positions 9–19 match the 'HIGH' region motif; sequence PSPTGYLHVGG. Positions 115 to 129 are enriched in basic and acidic residues; that stretch reads AGEKPRYDGTWRPEA. A disordered region spans residues 115–136; the sequence is AGEKPRYDGTWRPEAGKTLPAI. The short motif at 241 to 245 is the 'KMSKS' region element; it reads KLSKR. Residue K244 participates in ATP binding.

The protein belongs to the class-I aminoacyl-tRNA synthetase family. Glutamate--tRNA ligase type 1 subfamily. As to quaternary structure, monomer.

It localises to the cytoplasm. The catalysed reaction is tRNA(Glu) + L-glutamate + ATP = L-glutamyl-tRNA(Glu) + AMP + diphosphate. Catalyzes the attachment of glutamate to tRNA(Glu) in a two-step reaction: glutamate is first activated by ATP to form Glu-AMP and then transferred to the acceptor end of tRNA(Glu). The polypeptide is Glutamate--tRNA ligase (Janthinobacterium sp. (strain Marseille) (Minibacterium massiliensis)).